The sequence spans 687 residues: Protein SDA1 homolog (687 aa).

Disordered regions lie at residues 517–549 (SSDEEQEDEDPSGENQEGEEDGQTRAARISQMR), 561–587 (MKQLTKEVQPKLGKKRKRATTTEEPQG), and 615–687 (TVIA…KSKI). The span at 520 to 537 (EEQEDEDPSGENQEGEED) shows a compositional bias: acidic residues. Over residues 644 to 666 (EKRRKKNFMMMRHNKLVRGKTKR) the composition is skewed to basic residues. A compositionally biased stretch (basic and acidic residues) spans 667 to 680 (SFRDKQIALRDSLL).

This sequence belongs to the SDA1 family.

Its subcellular location is the nucleus. The protein localises to the nucleolus. Functionally, required for 60S pre-ribosomal subunits export to the cytoplasm. The sequence is that of Protein SDA1 homolog (sdad1) from Nematostella vectensis (Starlet sea anemone).